The primary structure comprises 143 residues: Hemoglobin subunit alpha (143 aa).

One can recognise a Globin domain in the interval S2–R143. H60 contacts O2. H89 is a binding site for heme b.

It belongs to the globin family. As to quaternary structure, heterotetramer of two alpha chains and two beta chains. As to expression, red blood cells.

Its function is as follows. Involved in oxygen transport from gills to the various peripheral tissues. This chain is Hemoglobin subunit alpha (hba), found in Salmo salar (Atlantic salmon).